The primary structure comprises 449 residues: Cysteine--tRNA ligase (449 aa).

Residue C30 coordinates Zn(2+). The 'HIGH' region motif lies at 32–42; that stretch reads PTVYDRAHLGN. Residues C210, H235, and E239 each coordinate Zn(2+). The 'KMSKS' region signature appears at 268–272; the sequence is KMSKS. K271 provides a ligand contact to ATP.

This sequence belongs to the class-I aminoacyl-tRNA synthetase family. Monomer. Zn(2+) serves as cofactor.

The protein resides in the cytoplasm. It catalyses the reaction tRNA(Cys) + L-cysteine + ATP = L-cysteinyl-tRNA(Cys) + AMP + diphosphate. This chain is Cysteine--tRNA ligase, found in Acidiphilium cryptum (strain JF-5).